A 430-amino-acid polypeptide reads, in one-letter code: Arrestin-related trafficking adapter 10 (430 aa).

Positions alanine 55–glutamate 75 are disordered. Residues arginine 63–tyrosine 72 show a composition bias toward polar residues.

The protein belongs to the ART10 family.

It localises to the cytoplasm. Functionally, may regulate endocytosis by recruiting RSP5 ubiquitin ligase activity to specific plasma membrane proteins in response to extracellular stimuli. This chain is Arrestin-related trafficking adapter 10 (ART10), found in Eremothecium gossypii (strain ATCC 10895 / CBS 109.51 / FGSC 9923 / NRRL Y-1056) (Yeast).